We begin with the raw amino-acid sequence, 214 residues long: Imidazole glycerol phosphate synthase subunit HisH (214 aa).

Residues 2 to 214 (RVALIDYGSG…LIANFLRWAP (213 aa)) form the Glutamine amidotransferase type-1 domain. The active-site Nucleophile is C88. Active-site residues include H194 and E196.

As to quaternary structure, heterodimer of HisH and HisF.

The protein localises to the cytoplasm. It carries out the reaction 5-[(5-phospho-1-deoxy-D-ribulos-1-ylimino)methylamino]-1-(5-phospho-beta-D-ribosyl)imidazole-4-carboxamide + L-glutamine = D-erythro-1-(imidazol-4-yl)glycerol 3-phosphate + 5-amino-1-(5-phospho-beta-D-ribosyl)imidazole-4-carboxamide + L-glutamate + H(+). The catalysed reaction is L-glutamine + H2O = L-glutamate + NH4(+). It functions in the pathway amino-acid biosynthesis; L-histidine biosynthesis; L-histidine from 5-phospho-alpha-D-ribose 1-diphosphate: step 5/9. In terms of biological role, IGPS catalyzes the conversion of PRFAR and glutamine to IGP, AICAR and glutamate. The HisH subunit catalyzes the hydrolysis of glutamine to glutamate and ammonia as part of the synthesis of IGP and AICAR. The resulting ammonia molecule is channeled to the active site of HisF. The chain is Imidazole glycerol phosphate synthase subunit HisH from Rhodospirillum rubrum (strain ATCC 11170 / ATH 1.1.1 / DSM 467 / LMG 4362 / NCIMB 8255 / S1).